The chain runs to 325 residues: Cytochrome c1, heme protein, mitochondrial (325 aa).

A mitochondrion-targeting transit peptide spans 1–84 (MAAAAATLRG…AVALHSAVSA (84 aa)). At 85-281 (SDLELHPPSY…TFLRWAAEPE (197 aa)) the chain is on the mitochondrial intermembrane side. One can recognise a Cytochrome c domain in the interval 108–209 (TSIRRGFQVY…IVRARHGGED (102 aa)). Heme c is bound by residues Cys121, Cys124, His125, and Met244. Residues 282–315 (HDHRKRMGLKMLLMMGLLLPLVYAMKRHKWSVLK) form a helical membrane-spanning segment. The Mitochondrial matrix portion of the chain corresponds to 316–325 (SRKLAYRPPK).

This sequence belongs to the cytochrome c family. As to quaternary structure, component of the ubiquinol-cytochrome c oxidoreductase (cytochrome b-c1 complex, complex III, CIII), a multisubunit enzyme composed of 11 subunits. The complex is composed of 3 respiratory subunits cytochrome b, cytochrome c1 and Rieske protein UQCRFS1, 2 core protein subunits UQCRC1/QCR1 and UQCRC2/QCR2, and 6 low-molecular weight protein subunits UQCRH/QCR6, UQCRB/QCR7, UQCRQ/QCR8, UQCR10/QCR9, UQCR11/QCR10 and subunit 9, the cleavage product of Rieske protein UQCRFS1. The complex exists as an obligatory dimer and forms supercomplexes (SCs) in the inner mitochondrial membrane with NADH-ubiquinone oxidoreductase (complex I, CI) and cytochrome c oxidase (complex IV, CIV), resulting in different assemblies (supercomplex SCI(1)III(2)IV(1) and megacomplex MCI(2)III(2)IV(2)). Interacts with FLVCR2; this interaction occurs in the absence of heme and is disrupted upon heme binding. Heme c is required as a cofactor.

It is found in the mitochondrion inner membrane. It carries out the reaction a quinol + 2 Fe(III)-[cytochrome c](out) = a quinone + 2 Fe(II)-[cytochrome c](out) + 2 H(+)(out). Its function is as follows. Component of the ubiquinol-cytochrome c oxidoreductase, a multisubunit transmembrane complex that is part of the mitochondrial electron transport chain which drives oxidative phosphorylation. The respiratory chain contains 3 multisubunit complexes succinate dehydrogenase (complex II, CII), ubiquinol-cytochrome c oxidoreductase (cytochrome b-c1 complex, complex III, CIII) and cytochrome c oxidase (complex IV, CIV), that cooperate to transfer electrons derived from NADH and succinate to molecular oxygen, creating an electrochemical gradient over the inner membrane that drives transmembrane transport and the ATP synthase. The cytochrome b-c1 complex catalyzes electron transfer from ubiquinol to cytochrome c, linking this redox reaction to translocation of protons across the mitochondrial inner membrane, with protons being carried across the membrane as hydrogens on the quinol. In the process called Q cycle, 2 protons are consumed from the matrix, 4 protons are released into the intermembrane space and 2 electrons are passed to cytochrome c. Cytochrome c1 is a catalytic core subunit containing a c-type heme. It transfers electrons from the [2Fe-2S] iron-sulfur cluster of the Rieske protein to cytochrome c. The chain is Cytochrome c1, heme protein, mitochondrial (CYC1) from Bos taurus (Bovine).